A 327-amino-acid polypeptide reads, in one-letter code: Transcription factor bHLH48 (327 aa).

The tract at residues 137-179 (EPAETDSMVENQNQSYSSGKRKEREKKVKSSTKKNKSSVESDK) is disordered. The bHLH domain occupies 191–241 (QATDNHSLAERARREKINARMKLLQELVPGCDKIQGTALVLDEIINHVQTL).

Homodimer. In terms of tissue distribution, expressed in leaves, stems, and flowers.

The protein resides in the nucleus. This Arabidopsis thaliana (Mouse-ear cress) protein is Transcription factor bHLH48 (BHLH48).